The chain runs to 308 residues: 3'(2'),5'-bisphosphate nucleotidase 1 (308 aa).

Ala-2 carries the post-translational modification N-acetylalanine. Catalysis depends on Asp-51, which acts as the Proton acceptor. Mg(2+) contacts are provided by Glu-74, Asp-117, Leu-119, and Asp-120. The active-site Proton acceptor is Thr-122. At Thr-122 the chain carries Phosphothreonine. Residues Thr-195, His-198, Gly-220, and Lys-224 each contribute to the AMP site. Ser-240 is modified (phosphoserine). N6-succinyllysine is present on Lys-244. Asp-247 contacts Mg(2+).

Belongs to the inositol monophosphatase superfamily. It depends on Mg(2+) as a cofactor. As to expression, widely expressed. Highly expressed in kidney.

It carries out the reaction adenosine 3',5'-bisphosphate + H2O = AMP + phosphate. It catalyses the reaction adenosine 2',5'-bisphosphate + H2O = AMP + phosphate. The catalysed reaction is 3'-phosphoadenylyl sulfate + H2O = adenosine 5'-phosphosulfate + phosphate. The enzyme catalyses 1D-myo-inositol 1,4-bisphosphate + H2O = 1D-myo-inositol 4-phosphate + phosphate. It carries out the reaction 1D-myo-inositol 1,3,4-trisphosphate + H2O = 1D-myo-inositol 3,4-bisphosphate + phosphate. With respect to regulation, uncompetitively inhibited by Li(+) (IC(50)=157 uM). PAP hydrolysis is competitively inhibited by PAPS (IC(50)=0.7 uM) and by inositol 1,4-bisphosphate (IC(50)=15 uM). Its function is as follows. Phosphatase that converts 3'(2')-phosphoadenosine 5'-phosphate (PAP) to AMP and adenosine 3'-phosphate 5'-phosphosulfate (PAPS) to adenosine 5'-phosphosulfate (APS). Is also able to hydrolyze inositol 1,4-bisphosphate (Ins(1,4)P2) and inositol 1,3,4-trisphosphate (Ins(1,3,4)P3), and is not active on Ins(1)P, Ins(4)P, Ins(3,4)P2, Ins(1,4,5)P3, Ins(1,3,4,5)P4, Ins(1,3,4,5,6)P5 or InsP6. Probably prevents the toxic accumulation of PAP, a compound which inhibits a variety of proteins, including PAPS-utilizing enzymes such as sulfotransferases, and RNA processing enzymes. Could also play a role in inositol recycling and phosphoinositide metabolism. The protein is 3'(2'),5'-bisphosphate nucleotidase 1 (Bpnt1) of Mus musculus (Mouse).